The following is a 365-amino-acid chain: Holliday junction branch migration complex subunit RuvB (365 aa).

The segment at 1-191 is large ATPase domain (RuvB-L); it reads MSPELGGGYD…FGFTAHMDFY (191 aa). Residues Leu30, Arg31, Gly72, Lys75, Thr76, Ser77, 138–140, Arg181, Tyr191, and Arg228 contribute to the ATP site; that span reads EDF. Residue Thr76 coordinates Mg(2+). The small ATPAse domain (RuvB-S) stretch occupies residues 192–262; it reads EPAELKQILM…IAHAALAVYD (71 aa). Residues 265 to 365 form a head domain (RuvB-H) region; sequence QLGLDRLDRS…QASLFDPEDP (101 aa). DNA contacts are provided by Arg320 and Arg325.

The protein belongs to the RuvB family. Homohexamer. Forms an RuvA(8)-RuvB(12)-Holliday junction (HJ) complex. HJ DNA is sandwiched between 2 RuvA tetramers; dsDNA enters through RuvA and exits via RuvB. An RuvB hexamer assembles on each DNA strand where it exits the tetramer. Each RuvB hexamer is contacted by two RuvA subunits (via domain III) on 2 adjacent RuvB subunits; this complex drives branch migration. In the full resolvosome a probable DNA-RuvA(4)-RuvB(12)-RuvC(2) complex forms which resolves the HJ.

It localises to the cytoplasm. The catalysed reaction is ATP + H2O = ADP + phosphate + H(+). The RuvA-RuvB-RuvC complex processes Holliday junction (HJ) DNA during genetic recombination and DNA repair, while the RuvA-RuvB complex plays an important role in the rescue of blocked DNA replication forks via replication fork reversal (RFR). RuvA specifically binds to HJ cruciform DNA, conferring on it an open structure. The RuvB hexamer acts as an ATP-dependent pump, pulling dsDNA into and through the RuvAB complex. RuvB forms 2 homohexamers on either side of HJ DNA bound by 1 or 2 RuvA tetramers; 4 subunits per hexamer contact DNA at a time. Coordinated motions by a converter formed by DNA-disengaged RuvB subunits stimulates ATP hydrolysis and nucleotide exchange. Immobilization of the converter enables RuvB to convert the ATP-contained energy into a lever motion, pulling 2 nucleotides of DNA out of the RuvA tetramer per ATP hydrolyzed, thus driving DNA branch migration. The RuvB motors rotate together with the DNA substrate, which together with the progressing nucleotide cycle form the mechanistic basis for DNA recombination by continuous HJ branch migration. Branch migration allows RuvC to scan DNA until it finds its consensus sequence, where it cleaves and resolves cruciform DNA. The polypeptide is Holliday junction branch migration complex subunit RuvB (Rhodococcus opacus (strain B4)).